Consider the following 378-residue polypeptide: Phosphoserine aminotransferase (378 aa).

Residue Arg-53 coordinates L-glutamate. Pyridoxal 5'-phosphate is bound by residues Trp-117, Thr-167, Asp-190, and Gln-213. Lys-214 is subject to N6-(pyridoxal phosphate)lysine. Residue 255–256 coordinates pyridoxal 5'-phosphate; that stretch reads NT.

The protein belongs to the class-V pyridoxal-phosphate-dependent aminotransferase family. SerC subfamily. As to quaternary structure, homodimer. Pyridoxal 5'-phosphate serves as cofactor.

It localises to the cytoplasm. The catalysed reaction is O-phospho-L-serine + 2-oxoglutarate = 3-phosphooxypyruvate + L-glutamate. It carries out the reaction 4-(phosphooxy)-L-threonine + 2-oxoglutarate = (R)-3-hydroxy-2-oxo-4-phosphooxybutanoate + L-glutamate. It functions in the pathway amino-acid biosynthesis; L-serine biosynthesis; L-serine from 3-phospho-D-glycerate: step 2/3. The protein operates within cofactor biosynthesis; pyridoxine 5'-phosphate biosynthesis; pyridoxine 5'-phosphate from D-erythrose 4-phosphate: step 3/5. Its function is as follows. Catalyzes the reversible conversion of 3-phosphohydroxypyruvate to phosphoserine and of 3-hydroxy-2-oxo-4-phosphonooxybutanoate to phosphohydroxythreonine. The sequence is that of Phosphoserine aminotransferase from Ralstonia pickettii (strain 12J).